Reading from the N-terminus, the 369-residue chain is Putative agmatine deiminase 2 (369 aa).

C356 functions as the Amidino-cysteine intermediate in the catalytic mechanism.

Belongs to the agmatine deiminase family.

It catalyses the reaction agmatine + H2O = N-carbamoylputrescine + NH4(+). This Listeria monocytogenes serovar 1/2a (strain ATCC BAA-679 / EGD-e) protein is Putative agmatine deiminase 2.